A 346-amino-acid polypeptide reads, in one-letter code: DNA-directed RNA polymerase subunit alpha (346 aa).

Residues Met-1–Glu-243 form an alpha N-terminal domain (alpha-NTD) region. Residues Leu-260 to Ala-346 form an alpha C-terminal domain (alpha-CTD) region.

The protein belongs to the RNA polymerase alpha chain family. Homodimer. The RNAP catalytic core consists of 2 alpha, 1 beta, 1 beta' and 1 omega subunit. When a sigma factor is associated with the core the holoenzyme is formed, which can initiate transcription.

The enzyme catalyses RNA(n) + a ribonucleoside 5'-triphosphate = RNA(n+1) + diphosphate. Its function is as follows. DNA-dependent RNA polymerase catalyzes the transcription of DNA into RNA using the four ribonucleoside triphosphates as substrates. This chain is DNA-directed RNA polymerase subunit alpha, found in Sorangium cellulosum (strain So ce56) (Polyangium cellulosum (strain So ce56)).